The following is a 246-amino-acid chain: Serine protease 1 (246 aa).

Positions 1–15 are cleaved as a signal peptide; the sequence is MKTFIFLALLGATVA. A propeptide spans 16–23 (activation peptide); that stretch reads FPIDDDDK. Residues 24–244 enclose the Peptidase S1 domain; that stretch reads IVGGYTCSRN…YVSWIQQTIA (221 aa). 6 disulfides stabilise this stretch: Cys30–Cys160, Cys48–Cys64, Cys132–Cys233, Cys139–Cys206, Cys171–Cys185, and Cys196–Cys220. His63 (charge relay system) is an active-site residue. Residues Glu75, Asn77, Val80, and Glu85 each contribute to the Ca(2+) site. The active-site Charge relay system is the Asp107. The active-site Charge relay system is the Ser200.

This sequence belongs to the peptidase S1 family. Interacts with SERPINA1. Ca(2+) serves as cofactor.

It is found in the secreted. It localises to the extracellular space. It carries out the reaction Preferential cleavage: Arg-|-Xaa, Lys-|-Xaa.. This chain is Serine protease 1, found in Canis lupus familiaris (Dog).